The chain runs to 251 residues: MNLTSIPALQDNYIWTLNDDSGRCLIVDPGEAAPVLRAITENQWQPQAILLTHHHHDHVGGVAELLSHYPDLTVYGPQETSHKGANSLVGDGDRIHVLGLDFTIIATPGHTLGHISYFSHPYLFCGDTLFSAGCGRLFEGTAKQMFESFQKLNQLPDDTLVCCAHEYTLSNLTFSHTFYPQDTEIARYYHEIKELRSKNGITLPTKLELERKINVFLRTKDVELQRLISTEPDHLDEWEIFATLREKKDSF.

Zn(2+) contacts are provided by histidine 53, histidine 55, aspartate 57, histidine 58, histidine 110, aspartate 127, and histidine 165.

Belongs to the metallo-beta-lactamase superfamily. Glyoxalase II family. In terms of assembly, monomer. The cofactor is Zn(2+).

The catalysed reaction is an S-(2-hydroxyacyl)glutathione + H2O = a 2-hydroxy carboxylate + glutathione + H(+). The protein operates within secondary metabolite metabolism; methylglyoxal degradation; (R)-lactate from methylglyoxal: step 2/2. In terms of biological role, thiolesterase that catalyzes the hydrolysis of S-D-lactoyl-glutathione to form glutathione and D-lactic acid. This chain is Hydroxyacylglutathione hydrolase, found in Erwinia tasmaniensis (strain DSM 17950 / CFBP 7177 / CIP 109463 / NCPPB 4357 / Et1/99).